Consider the following 436-residue polypeptide: Tol-Pal system protein TolB (436 aa).

The first 28 residues, 1–28 (MEMLRRNFFRLLMVLVAGCGLIASPAKA), serve as a signal peptide directing secretion.

This sequence belongs to the TolB family. In terms of assembly, the Tol-Pal system is composed of five core proteins: the inner membrane proteins TolA, TolQ and TolR, the periplasmic protein TolB and the outer membrane protein Pal. They form a network linking the inner and outer membranes and the peptidoglycan layer.

Its subcellular location is the periplasm. Functionally, part of the Tol-Pal system, which plays a role in outer membrane invagination during cell division and is important for maintaining outer membrane integrity. The polypeptide is Tol-Pal system protein TolB (Sinorhizobium medicae (strain WSM419) (Ensifer medicae)).